We begin with the raw amino-acid sequence, 239 residues long: Ribosomal RNA small subunit methyltransferase G (239 aa).

S-adenosyl-L-methionine-binding positions include G79, F84, 130-131, and R149; that span reads AE. Residues 218–227 show a composition bias toward basic residues; sequence KHKKTPKKYP. The interval 218-239 is disordered; sequence KHKKTPKKYPRQAGTPNKKPIA.

Belongs to the methyltransferase superfamily. RNA methyltransferase RsmG family.

It localises to the cytoplasm. In terms of biological role, specifically methylates the N7 position of a guanine in 16S rRNA. In Leuconostoc citreum (strain KM20), this protein is Ribosomal RNA small subunit methyltransferase G.